Here is a 1423-residue protein sequence, read N- to C-terminus: ABC transporter G family member 40 (1423 aa).

Residues 1–19 (MEGTSFHQASNSMRRNSSV) are compositionally biased toward polar residues. Residues 1–36 (MEGTSFHQASNSMRRNSSVWKKDSGREIFSRSSREE) are disordered. An N-linked (GlcNAc...) asparagine glycan is attached at asparagine 16. The span at 20–34 (WKKDSGREIFSRSSR) shows a compositional bias: basic and acidic residues. In terms of domain architecture, ABC transporter 1 spans 154 to 427 (LNTLHLVPNR…FETMGFKCPP (274 aa)). Residue 187 to 194 (GPPSSGKT) coordinates ATP. Asparagine 376 carries N-linked (GlcNAc...) asparagine glycosylation. Residues 505–718 (ELVKTSFSRE…GQNAILANEF (214 aa)) form the ABC transmembrane type-2 1 domain. The next 6 membrane-spanning stretches (helical) occupy residues 523–543 (FVYYFKFGQLLVMAFLTMTLF), 562–582 (ALFFILMMLMFNGMSELSMTI), 611–631 (IPISFMEAALTTFITYYVIGF), 643–663 (ILLVLMNQMASALFKMVAALG), 667–687 (IVANTFGAFAMLVFFALGGVV), and 696–716 (WWIWGYWISPIMYGQNAILAN). A glycan (N-linked (GlcNAc...) asparagine) is linked at asparagine 729. A helical transmembrane segment spans residues 756–776 (GALLGFVVLFNFGFTLALTFL). One can recognise an ABC transporter 2 domain in the interval 825–1077 (ITFDNVVYSV…HLINYFESIQ (253 aa)). Residue 870 to 877 (GVSGAGKT) coordinates ATP. Residue asparagine 895 is glycosylated (N-linked (GlcNAc...) asparagine). Threonine 962 bears the Phosphothreonine mark. The region spanning 1150–1364 (TQCMASLWKQ…TLYGLIASQF (215 aa)) is the ABC transmembrane type-2 2 domain. The next 6 helical transmembrane spans lie at 1174 to 1194 (FLFTIGIALMFGTMFWDLGGK), 1207 to 1227 (SMYTAVLFLGLQNAASVQPVV), 1257 to 1277 (IPYVLVQAIVYGLIVYAMIGF), 1284 to 1304 (FFWYLFFMYGSFLTFTFYGMM), 1314 to 1334 (IASVVSSAFYGIWNLFSGFLI), and 1341 to 1361 (VWWEWYYWLCPVAWTLYGLIA). Asparagine 1375 carries N-linked (GlcNAc...) asparagine glycosylation. The chain crosses the membrane as a helical span at residues 1395–1415 (VVAAMNVIFPLLFAVIFAIGI).

The protein belongs to the ABC transporter superfamily. ABCG family. PDR (TC 3.A.1.205) subfamily. In terms of assembly, interacts with LECRK91 and LECRK92. As to expression, mostly observed in inflorescence meristems relative to cauline leaves and developing siliques. Ubiquitous with higher levels in leaves, stems and flowers. Also present in primary and lateral roots. In seeds, mainly expressed in the embryo and, to a lesser extent, in the endosperm.

It localises to the cell membrane. The enzyme catalyses abscisate(out) + ATP + H2O = abscisate(in) + ADP + phosphate + H(+). Inhibited by glibenclamide, verapamil and vanadate (ABC transporters inhibitors). Functionally, high affinity abscisic acid (ABA) transporter that mediates the import of ABA, with a preference for (+)-ABA, through the plasma membrane, especially in guard cells, and is involved in the intercellular and intracellular ABA signaling pathways leading, for example, to stomatal closure, thus conferring drought tolerance. Together with ABCG30, import into the embryo the ABA delivered from the endosperm via ABCG25 and ABCG31-mediated export to suppress radicle extension and subsequent embryonic growth. May be a general defense protein. Functions as a pump to exclude Pb(2+) ions and/or Pb(2+)-containing toxic compounds from the cytoplasm. Contributes to Pb(2+) ions resistance. Confers some resistance to the terpene sclareol. Its function is as follows. (Microbial infection) Involved in resistance response to the pathogenic oomycetes Phytophthora infestans and Phytophthora capsici. In Arabidopsis thaliana (Mouse-ear cress), this protein is ABC transporter G family member 40.